Consider the following 164-residue polypeptide: NADH-quinone oxidoreductase subunit I (164 aa).

4Fe-4S ferredoxin-type domains are found at residues 55-85 and 95-124; these read LRRY…IDAE and TRYD…EGPN. The [4Fe-4S] cluster site is built by C65, C68, C71, C75, C104, C107, C110, and C114.

This sequence belongs to the complex I 23 kDa subunit family. NDH-1 is composed of 14 different subunits. Subunits NuoA, H, J, K, L, M, N constitute the membrane sector of the complex. The cofactor is [4Fe-4S] cluster.

It is found in the cell inner membrane. It carries out the reaction a quinone + NADH + 5 H(+)(in) = a quinol + NAD(+) + 4 H(+)(out). Its function is as follows. NDH-1 shuttles electrons from NADH, via FMN and iron-sulfur (Fe-S) centers, to quinones in the respiratory chain. The immediate electron acceptor for the enzyme in this species is believed to be ubiquinone. Couples the redox reaction to proton translocation (for every two electrons transferred, four hydrogen ions are translocated across the cytoplasmic membrane), and thus conserves the redox energy in a proton gradient. This chain is NADH-quinone oxidoreductase subunit I, found in Ruegeria sp. (strain TM1040) (Silicibacter sp.).